Here is a 322-residue protein sequence, read N- to C-terminus: Aldo-keto reductase family 1 member C23 (322 aa).

20 to 24 (GFGTY) provides a ligand contact to NADP(+). Residue K31 coordinates substrate. D50 serves as a coordination point for NADP(+). Y55 functions as the Proton donor in the catalytic mechanism. H117 contacts substrate. NADP(+) contacts are provided by residues 166–167 (SN), Q190, 216–221 (YSALGS), and 269–279 (KSYNEKRIKEN).

This sequence belongs to the aldo/keto reductase family. Monomer. Detected in follicle granulosa cells (at protein level). Detected in heart, lung, liver, kidney, stomach, uterus, testis, skeletal muscle and granulosa cells of the follicle wall.

The protein localises to the cytoplasm. Its function is as follows. NADP-dependent oxidoreductase that has 20-alpha-hydroxysteroid dehydrogenase activity. In Equus caballus (Horse), this protein is Aldo-keto reductase family 1 member C23 (AKR1C23).